The primary structure comprises 312 residues: Porphobilinogen deaminase (312 aa).

At Cys241 the chain carries S-(dipyrrolylmethanemethyl)cysteine.

This sequence belongs to the HMBS family. Monomer. Dipyrromethane serves as cofactor.

The catalysed reaction is 4 porphobilinogen + H2O = hydroxymethylbilane + 4 NH4(+). The protein operates within porphyrin-containing compound metabolism; protoporphyrin-IX biosynthesis; coproporphyrinogen-III from 5-aminolevulinate: step 2/4. In terms of biological role, tetrapolymerization of the monopyrrole PBG into the hydroxymethylbilane pre-uroporphyrinogen in several discrete steps. The protein is Porphobilinogen deaminase of Cytophaga hutchinsonii (strain ATCC 33406 / DSM 1761 / CIP 103989 / NBRC 15051 / NCIMB 9469 / D465).